A 1010-amino-acid polypeptide reads, in one-letter code: MQRNNGEGRPEGMHRISRFLHGNPFKNNASPQDDSTTRTEVYEEGGVEDSAVDYDNASGNAAPRLTAAPNTHAQQANLQSGNTSITHETQSTSRGQEATTSPSLSASHEKPARPQTGEGSDNEDEDEDIDALIEDLYSQDQEEEQVEEEESPGPAGAAKVVPEELLETDPKYGLTESEVEERKKKYGLNQMKEEKTNNIKKFLSFFVGPIQFVMELAAALAAGLRDWVDFGVICALLLLNATVGFVQEYQAGSIVDELKKTMALKASVLRDGRVKEIEASEIVPGDILHLDEGTICPADGRLITKDCFLQVDQSAITGESLAVDKHQNDTMYSSSTVKRGEAFMVVTATADSTFVGRAASLVGAAGQSQGHFTEVLNGIGTILLVLVILTLLCIYTAAFYRSVRLAALLEYTLAITIIGVPVGLPAVVTTTMAVGAAYLAKKKAIVQKLSAIESLAGVEILCSDKTGTLTKNRLSLGEPYCVEGVSPDDLMLTACLASSRKKKGLDAIDKAFLKALRNYPKAKDQLSKYKVLDFHPFDPVSKKITAYVEAPDGQRITCVKGAPLWVFKTVQDDHEVPEAITDAYREQVNDMASRGFRSLGVARKADGKQWEILGIMPCSDPPRHDTARTIHEAIGLGLRIKMLTGDAVGIAKETARQLGMGTNVYNAERLGLSGGGDMPGSEVNDFVEAADGFAEVFPQHKYAVVDILQQRGYLVAMTGDGVNDAPSLKKADAGIAVEGASDAARSAADIVFLAPGLSAIIDALKTSRQIFHRMYAYVVYRIALSLHLEIFLGLWLIIRNQLLNLELIVFIAIFADVATLAIAYDNAPYAMKPVKWNLPRLWGLATIVGILLAIGTWIVNTTMIAQGQNRGIVQNFGVQDEVLFLQISLTENWLIFITRCSGPFWSSFPSWQLSGAVLVVDILATLFCIFGWFKGGHQTSIVAVIRIWMYSFGIFCLIAGVYYILSESSSFDRWMHGKHKERGTTRKLEDFVMQLQRTSTHHEAEGKVTS.

A compositionally biased stretch (basic and acidic residues) spans 1 to 14 (MQRNNGEGRPEGMH). Disordered stretches follow at residues 1 to 126 (MQRN…EDED) and 139 to 165 (QDQE…PEEL). The Cytoplasmic segment spans residues 1 to 201 (MQRNNGEGRP…KEEKTNNIKK (201 aa)). Over residues 25–34 (FKNNASPQDD) the composition is skewed to polar residues. Residues 42–52 (YEEGGVEDSAV) are compositionally biased toward acidic residues. Positions 68–106 (APNTHAQQANLQSGNTSITHETQSTSRGQEATTSPSLSA) are enriched in polar residues. Residues 140 to 151 (DQEEEQVEEEES) are compositionally biased toward acidic residues. The chain crosses the membrane as a helical span at residues 202–222 (FLSFFVGPIQFVMELAAALAA). The Extracellular segment spans residues 223–226 (GLRD). Residues 227-246 (WVDFGVICALLLLNATVGFV) form a helical membrane-spanning segment. Residues 247–377 (QEYQAGSIVD…SQGHFTEVLN (131 aa)) lie on the Cytoplasmic side of the membrane. The helical transmembrane segment at 378–399 (GIGTILLVLVILTLLCIYTAAF) threads the bilayer. Residues 400-410 (YRSVRLAALLE) are Extracellular-facing. Residues 411 to 433 (YTLAITIIGVPVGLPAVVTTTMA) form a helical membrane-spanning segment. The Cytoplasmic portion of the chain corresponds to 434-805 (VGAAYLAKKK…LIIRNQLLNL (372 aa)). The 4-aspartylphosphate intermediate role is filled by Asp464. 2 residues coordinate Mg(2+): Asp720 and Asp724. A helical membrane pass occupies residues 806–824 (ELIVFIAIFADVATLAIAY). The Extracellular portion of the chain corresponds to 825-840 (DNAPYAMKPVKWNLPR). A helical transmembrane segment spans residues 841-860 (LWGLATIVGILLAIGTWIVN). Over 861-912 (TTMIAQGQNRGIVQNFGVQDEVLFLQISLTENWLIFITRCSGPFWSSFPSWQ) the chain is Cytoplasmic. The chain crosses the membrane as a helical span at residues 913 to 933 (LSGAVLVVDILATLFCIFGWF). Residues 934 to 946 (KGGHQTSIVAVIR) are Extracellular-facing. A helical transmembrane segment spans residues 947-963 (IWMYSFGIFCLIAGVYY). Residues 964–1010 (ILSESSSFDRWMHGKHKERGTTRKLEDFVMQLQRTSTHHEAEGKVTS) lie on the Cytoplasmic side of the membrane.

This sequence belongs to the cation transport ATPase (P-type) (TC 3.A.3) family. Type IIIA subfamily. In terms of processing, in addition to transient phosphorylation of the active site Asp residue, this protein, but not the product of the pma1 locus, is phosphorylated efficiently in isolated plasma membrane.

It is found in the cell membrane. It carries out the reaction ATP + H2O + H(+)(in) = ADP + phosphate + 2 H(+)(out). The plasma membrane ATPase of plants and fungi is a hydrogen ion pump. The proton gradient it generates drives the active transport of nutrients by H(+)-symport. The resulting external acidification and/or internal alkinization may mediate growth responses. The polypeptide is Plasma membrane ATPase 2 (pma2) (Schizosaccharomyces pombe (strain 972 / ATCC 24843) (Fission yeast)).